The primary structure comprises 199 residues: Superoxide dismutase [Mn/Fe] 2 (199 aa).

Residues His27, His81, Asp161, and His165 each contribute to the Fe(3+) site. 4 residues coordinate Mn(2+): His27, His81, Asp161, and His165.

It belongs to the iron/manganese superoxide dismutase family. Homodimer. Can also form a heterodimer with SodA. Mn(2+) is required as a cofactor. The cofactor is Fe(3+).

It carries out the reaction 2 superoxide + 2 H(+) = H2O2 + O2. In terms of biological role, destroys superoxide anion radicals which are normally produced within the cells and which are toxic to biological systems. Catalyzes the dismutation of superoxide anion radicals into O2 and H2O2 by successive reduction and oxidation of the transition metal ion at the active site. The chain is Superoxide dismutase [Mn/Fe] 2 (sodM) from Staphylococcus aureus (strain USA300).